The primary structure comprises 294 residues: tRNA pseudouridine synthase B (294 aa).

The active-site Nucleophile is Asp38.

Belongs to the pseudouridine synthase TruB family. Type 1 subfamily.

The catalysed reaction is uridine(55) in tRNA = pseudouridine(55) in tRNA. Responsible for synthesis of pseudouridine from uracil-55 in the psi GC loop of transfer RNAs. This is tRNA pseudouridine synthase B from Clostridium perfringens (strain 13 / Type A).